The primary structure comprises 860 residues: Probable leucine--tRNA ligase, cytoplasmic (860 aa).

A 'HIGH' region motif is present at residues 41–51; it reads PYMNGKLHLGH. The short motif at 552–556 is the 'KMSKS' region element; it reads KMSKS. Lys555 contributes to the ATP binding site.

The protein belongs to the class-I aminoacyl-tRNA synthetase family.

It localises to the cytoplasm. The catalysed reaction is tRNA(Leu) + L-leucine + ATP = L-leucyl-tRNA(Leu) + AMP + diphosphate. The polypeptide is Probable leucine--tRNA ligase, cytoplasmic (Enterocytozoon bieneusi (strain H348) (Microsporidian parasite)).